A 357-amino-acid chain; its full sequence is Chorismate synthase (357 aa).

An NADP(+)-binding site is contributed by Arg48. Residues 125 to 127 (RSS), 238 to 239 (NA), Gly282, 297 to 301 (KPTSS), and Arg323 contribute to the FMN site.

This sequence belongs to the chorismate synthase family. Homotetramer. Requires FMNH2 as cofactor.

The catalysed reaction is 5-O-(1-carboxyvinyl)-3-phosphoshikimate = chorismate + phosphate. It functions in the pathway metabolic intermediate biosynthesis; chorismate biosynthesis; chorismate from D-erythrose 4-phosphate and phosphoenolpyruvate: step 7/7. Its function is as follows. Catalyzes the anti-1,4-elimination of the C-3 phosphate and the C-6 proR hydrogen from 5-enolpyruvylshikimate-3-phosphate (EPSP) to yield chorismate, which is the branch point compound that serves as the starting substrate for the three terminal pathways of aromatic amino acid biosynthesis. This reaction introduces a second double bond into the aromatic ring system. This chain is Chorismate synthase, found in Gluconacetobacter diazotrophicus (strain ATCC 49037 / DSM 5601 / CCUG 37298 / CIP 103539 / LMG 7603 / PAl5).